A 190-amino-acid polypeptide reads, in one-letter code: Holliday junction branch migration complex subunit RuvA (190 aa).

The segment at 1 to 64 (MIGSLTGIIE…DNLTQLYGFL (64 aa)) is domain I. Residues 65–142 (DKQEQDYMRM…KMPIEETLII (78 aa)) are domain II. Position 143 (Lys143) is a region of interest, flexible linker. Residues 143–190 (KEDDSLAALISLGYDKLKAFNAIQEIKANFPDDSIQEIIRKALQKLSQ) are domain III.

The protein belongs to the RuvA family. Homotetramer. Forms an RuvA(8)-RuvB(12)-Holliday junction (HJ) complex. HJ DNA is sandwiched between 2 RuvA tetramers; dsDNA enters through RuvA and exits via RuvB. An RuvB hexamer assembles on each DNA strand where it exits the tetramer. Each RuvB hexamer is contacted by two RuvA subunits (via domain III) on 2 adjacent RuvB subunits; this complex drives branch migration. In the full resolvosome a probable DNA-RuvA(4)-RuvB(12)-RuvC(2) complex forms which resolves the HJ.

It is found in the cytoplasm. The RuvA-RuvB-RuvC complex processes Holliday junction (HJ) DNA during genetic recombination and DNA repair, while the RuvA-RuvB complex plays an important role in the rescue of blocked DNA replication forks via replication fork reversal (RFR). RuvA specifically binds to HJ cruciform DNA, conferring on it an open structure. The RuvB hexamer acts as an ATP-dependent pump, pulling dsDNA into and through the RuvAB complex. HJ branch migration allows RuvC to scan DNA until it finds its consensus sequence, where it cleaves and resolves the cruciform DNA. This is Holliday junction branch migration complex subunit RuvA from Ehrlichia chaffeensis (strain ATCC CRL-10679 / Arkansas).